The chain runs to 578 residues: Kelch repeat-containing protein kel-10 (578 aa).

A BTB domain is found at 51–118 (PTVTLVLRNN…PKAFEQGIKP (68 aa)). Positions 158–236 (IKIFRLALLY…NSPLQSDRMA (79 aa)) constitute a BACK domain. Kelch repeat units follow at residues 265 to 315 (AIVC…VVED), 316 to 362 (KLIV…RIND), 368 to 414 (LIFA…TIDN), 416 to 462 (IVVI…SIMN), 464 to 510 (VCMI…QMDT), and 512 to 558 (SIYV…TLSD).

The sequence is that of Kelch repeat-containing protein kel-10 from Caenorhabditis elegans.